The chain runs to 204 residues: 3,4-dihydroxy-2-butanone 4-phosphate synthase (204 aa).

E30 is a binding site for Mg(2+). Residue D34 participates in D-ribulose 5-phosphate binding. Residue C59 is modified to S-glutathionyl cysteine. D-ribulose 5-phosphate-binding positions include T85 and 142–146 (RRGHT). H145 contributes to the Mg(2+) binding site.

In terms of assembly, homodimer. It depends on Mg(2+) as a cofactor. Mn(2+) is required as a cofactor. Post-translationally, S-glutathionylation is reversible and dependent on a glutaredoxin.

It carries out the reaction D-ribulose 5-phosphate = (2S)-2-hydroxy-3-oxobutyl phosphate + formate + H(+). Its pathway is cofactor biosynthesis; riboflavin biosynthesis; 2-hydroxy-3-oxobutyl phosphate from D-ribulose 5-phosphate: step 1/1. In terms of biological role, catalyzes the conversion of D-ribulose 5-phosphate to formate and 3,4-dihydroxy-2-butanone 4-phosphate. In Candida albicans (strain SC5314 / ATCC MYA-2876) (Yeast), this protein is 3,4-dihydroxy-2-butanone 4-phosphate synthase (RIB3).